We begin with the raw amino-acid sequence, 436 residues long: GTPase Obg (436 aa).

The 159-residue stretch at 2–160 (SMFLDTAKVS…RELALELKIL (159 aa)) folds into the Obg domain. The OBG-type G domain occupies 161-338 (ADVGLVGFPS…LLDATAQLLA (178 aa)). GTP contacts are provided by residues 167–174 (GFPSVGKS), 192–196 (FTTIV), 214–217 (DLPG), 284–287 (NKMD), and 319–321 (SGI). Mg(2+) is bound by residues Ser-174 and Thr-194. The region spanning 358–436 (GFEEEEKAFD…IGKFEFEFVD (79 aa)) is the OCT domain.

It belongs to the TRAFAC class OBG-HflX-like GTPase superfamily. OBG GTPase family. As to quaternary structure, monomer. Mg(2+) is required as a cofactor.

Its subcellular location is the cytoplasm. An essential GTPase which binds GTP, GDP and possibly (p)ppGpp with moderate affinity, with high nucleotide exchange rates and a fairly low GTP hydrolysis rate. Plays a role in control of the cell cycle, stress response, ribosome biogenesis and in those bacteria that undergo differentiation, in morphogenesis control. The polypeptide is GTPase Obg (Streptococcus mutans serotype c (strain ATCC 700610 / UA159)).